The primary structure comprises 331 residues: Beta-hexosaminidase (331 aa).

Substrate-binding positions include aspartate 60, arginine 68, arginine 133, and 163 to 164 (KH). Histidine 176 functions as the Proton donor/acceptor in the catalytic mechanism. Aspartate 247 serves as the catalytic Nucleophile.

The protein belongs to the glycosyl hydrolase 3 family. NagZ subfamily.

It is found in the cytoplasm. It carries out the reaction Hydrolysis of terminal non-reducing N-acetyl-D-hexosamine residues in N-acetyl-beta-D-hexosaminides.. It participates in cell wall biogenesis; peptidoglycan recycling. Plays a role in peptidoglycan recycling by cleaving the terminal beta-1,4-linked N-acetylglucosamine (GlcNAc) from peptide-linked peptidoglycan fragments, giving rise to free GlcNAc, anhydro-N-acetylmuramic acid and anhydro-N-acetylmuramic acid-linked peptides. The chain is Beta-hexosaminidase from Xanthomonas campestris pv. campestris (strain B100).